The following is a 488-amino-acid chain: Multidrug resistance outer membrane protein MdtP (488 aa).

The signal sequence occupies residues 1 to 23; that stretch reads MINRQLSRLLLCSILGSTTLISG. Cys24 is lipidated: N-palmitoyl cysteine. Cys24 is lipidated: S-diacylglycerol cysteine.

Belongs to the outer membrane factor (OMF) (TC 1.B.17) family. Could be part of a tripartite efflux system composed of MdtN, MdtO and MdtP.

It localises to the cell outer membrane. In terms of biological role, could be involved in resistance to puromycin, acriflavine and tetraphenylarsonium chloride. The polypeptide is Multidrug resistance outer membrane protein MdtP (mdtP) (Escherichia coli (strain K12)).